The primary structure comprises 394 residues: Phosphopentomutase (394 aa).

Mn(2+) contacts are provided by Asp-10, Asp-282, His-287, Asp-323, His-324, and His-335.

The protein belongs to the phosphopentomutase family. Mn(2+) serves as cofactor.

It is found in the cytoplasm. It carries out the reaction 2-deoxy-alpha-D-ribose 1-phosphate = 2-deoxy-D-ribose 5-phosphate. The catalysed reaction is alpha-D-ribose 1-phosphate = D-ribose 5-phosphate. It functions in the pathway carbohydrate degradation; 2-deoxy-D-ribose 1-phosphate degradation; D-glyceraldehyde 3-phosphate and acetaldehyde from 2-deoxy-alpha-D-ribose 1-phosphate: step 1/2. Isomerase that catalyzes the conversion of deoxy-ribose 1-phosphate (dRib-1-P) and ribose 1-phosphate (Rib-1-P) to deoxy-ribose 5-phosphate (dRib-5-P) and ribose 5-phosphate (Rib-5-P), respectively. This chain is Phosphopentomutase, found in Dictyoglomus turgidum (strain DSM 6724 / Z-1310).